Consider the following 423-residue polypeptide: Probable sucrose-phosphatase 3b (423 aa).

The protein belongs to the sucrose phosphatase family. As to quaternary structure, homodimer. It depends on Mg(2+) as a cofactor.

The enzyme catalyses sucrose 6(F)-phosphate + H2O = sucrose + phosphate. The protein operates within glycan biosynthesis; sucrose biosynthesis; sucrose from D-fructose 6-phosphate and UDP-alpha-D-glucose: step 2/2. In terms of biological role, catalyzes the final step of sucrose synthesis. The chain is Probable sucrose-phosphatase 3b (SPP3B) from Arabidopsis thaliana (Mouse-ear cress).